The following is a 472-amino-acid chain: Sulfate adenylyltransferase subunit 1 (472 aa).

Residues 24–240 (KSLLRFLTCG…ENAEVGTRDL (217 aa)) form the tr-type G domain. The G1 stretch occupies residues 33 to 40 (GSVDDGKS). 33-40 (GSVDDGKS) contacts GTP. Residues 91-95 (GITID) are G2. Residues 112–115 (DTPG) are G3. Residues 112-116 (DTPGH) and 167-170 (NKMD) each bind GTP. Residues 167–170 (NKMD) are G4. Residues 204–206 (SAL) are G5.

It belongs to the TRAFAC class translation factor GTPase superfamily. Classic translation factor GTPase family. CysN/NodQ subfamily. As to quaternary structure, heterodimer composed of CysD, the smaller subunit, and CysN.

It carries out the reaction sulfate + ATP + H(+) = adenosine 5'-phosphosulfate + diphosphate. Its pathway is sulfur metabolism; hydrogen sulfide biosynthesis; sulfite from sulfate: step 1/3. With CysD forms the ATP sulfurylase (ATPS) that catalyzes the adenylation of sulfate producing adenosine 5'-phosphosulfate (APS) and diphosphate, the first enzymatic step in sulfur assimilation pathway. APS synthesis involves the formation of a high-energy phosphoric-sulfuric acid anhydride bond driven by GTP hydrolysis by CysN coupled to ATP hydrolysis by CysD. The protein is Sulfate adenylyltransferase subunit 1 of Tolumonas auensis (strain DSM 9187 / NBRC 110442 / TA 4).